Consider the following 623-residue polypeptide: Sulfite reductase [NADPH] flavoprotein alpha-component (623 aa).

Residues 1–32 form a disordered region; that stretch reads MSFQKNEYSHKNVSEDNNGQGGNPPIASPLND. In terms of domain architecture, Flavodoxin-like spans 87–225; it reads LTIIFASQTG…AAEEWRKNAL (139 aa). FMN is bound by residues 93–98, 140–143, and 176–185; these read SQTGNA, STNG, and LGDSSYEFFC. Residues 258 to 472 form the FAD-binding FR-type domain; it reads QNPYTATLLT…VEHNNNFKLP (215 aa). FAD-binding positions include Thr346, Ala380, 410–413, 428–430, Tyr434, and 443–446; these read RLYS, TVG, and GGAS. NADP(+) is bound by residues 543–544, 549–553, and Asp585; these read SR and KVYVQ. Tyr623 provides a ligand contact to FAD.

Belongs to the NADPH-dependent sulphite reductase flavoprotein subunit CysJ family. The protein in the N-terminal section; belongs to the flavodoxin family. This sequence in the C-terminal section; belongs to the flavoprotein pyridine nucleotide cytochrome reductase family. As to quaternary structure, alpha(8)-beta(8). The alpha component is a flavoprotein, the beta component is a hemoprotein. FAD is required as a cofactor. FMN serves as cofactor.

It carries out the reaction hydrogen sulfide + 3 NADP(+) + 3 H2O = sulfite + 3 NADPH + 4 H(+). The protein operates within sulfur metabolism; hydrogen sulfide biosynthesis; hydrogen sulfide from sulfite (NADPH route): step 1/1. Component of the sulfite reductase complex that catalyzes the 6-electron reduction of sulfite to sulfide. This is one of several activities required for the biosynthesis of L-cysteine from sulfate. The flavoprotein component catalyzes the electron flow from NADPH -&gt; FAD -&gt; FMN to the hemoprotein component. In Vibrio parahaemolyticus serotype O3:K6 (strain RIMD 2210633), this protein is Sulfite reductase [NADPH] flavoprotein alpha-component.